Reading from the N-terminus, the 1482-residue chain is Cystic fibrosis transmembrane conductance regulator (1482 aa).

Over Met1 to Phe77 the chain is Cytoplasmic. Residues Phe78–Gln98 traverse the membrane as a helical segment. One can recognise an ABC transmembrane type-1 1 domain in the interval Phe81–Leu365. The Extracellular segment spans residues Pro99–Tyr122. Residues Leu123–His146 form a helical membrane-spanning segment. Over His147–Leu195 the chain is Cytoplasmic. Residues Ala196–Trp216 form a helical membrane-spanning segment. Residues Asp217–Ser222 lie on the Extracellular side of the membrane. A helical transmembrane segment spans residues Ala223–Met243. The Cytoplasmic segment spans residues Met244–Lys298. The helical transmembrane segment at Ala299–Phe319 threads the bilayer. Residues Leu320 to Thr339 are Extracellular-facing. Residues Ile340–Val358 form a helical membrane-spanning segment. Residues Gln359–Arg859 are Cytoplasmic-facing. ATP contacts are provided by residues Trp401, Ser434, Gly458–Thr465, and Gln493. The ABC transporter 1 domain maps to Asn423–Gly646. Residue Cys524 is the site of S-palmitoyl cysteine attachment. 2 positions are modified to phosphoserine: Ser549 and Ser660. The disordered R region stretch occupies residues Ser654–Glu832. A Phosphoserine; by PKA modification is found at Ser670. The residue at position 686 (Ser686) is a Phosphoserine. Residue Lys688 forms a Glycyl lysine isopeptide (Lys-Gly) (interchain with G-Cter in ubiquitin) linkage. Ser700 and Ser712 each carry phosphoserine. Phosphothreonine is present on Thr717. Phosphoserine occurs at positions 737, 768, 796, and 814. Residues Leu860 to Val880 traverse the membrane as a helical segment. One can recognise an ABC transmembrane type-1 2 domain in the interval Leu860–Ser1156. At Leu881–Ile919 the chain is on the extracellular side. N-linked (GlcNAc...) asparagine glycans are attached at residues Asn895 and Asn901. Residues Tyr920–His940 traverse the membrane as a discontinuously helical segment. Topologically, residues Thr941–Thr991 are cytoplasmic. Residues Ile992–Leu1012 form a helical membrane-spanning segment. The Extracellular portion of the chain corresponds to Lys1013–Pro1014. The chain crosses the membrane as a helical span at residues Tyr1015 to Leu1035. The Cytoplasmic segment spans residues His1036–Thr1096. Residues Leu1097 to Phe1117 traverse the membrane as a helical segment. Residues Ile1118–Gly1131 are Extracellular-facing. The helical transmembrane segment at Ile1132–Ile1152 threads the bilayer. At Asp1153 to Leu1482 the chain is on the cytoplasmic side. An ABC transporter 2 domain is found at Met1212–Pro1445. ATP contacts are provided by residues Tyr1221 and Gly1246–Ser1253. Residues Arg1388–Leu1482 form an interaction with GORASP2 region. The S-palmitoyl cysteine moiety is linked to residue Cys1397. Ser1446 is subject to Phosphoserine. Positions Lys1450 to Leu1482 are disordered. A compositionally biased stretch (acidic residues) spans Glu1472 to Leu1482. A PDZ-binding motif is present at residues Thr1480 to Leu1482.

The protein belongs to the ABC transporter superfamily. ABCC family. CFTR transporter (TC 3.A.1.202) subfamily. In terms of assembly, monomer; does not require oligomerization for channel activity. May form oligomers in the membrane. Interacts with SLC26A3, SLC26A6 and NHERF1. Interacts with SHANK2. Interacts with MYO6. Interacts (via C-terminus) with GOPC (via PDZ domain); this promotes CFTR internalization and thereby decreases channel activity. Interacts with SLC4A7 through NHERF1. Found in a complex with MYO5B and RAB11A. Interacts with ANO1. Interacts with SLC26A8. Interacts with AHCYL1; the interaction increases CFTR activity. Interacts with CSE1L. The core-glycosylated form interacts with GORASP2 (via PDZ GRASP-type 1 domain) in respone to ER stress. Interacts with MARCHF2; the interaction leads to CFTR ubiqtuitination and degradation. Interacts with ADGRG2. Post-translationally, N-glycosylated. Phosphorylated; cAMP treatment promotes phosphorylation and activates the channel. Dephosphorylation decreases the ATPase activity (in vitro). Phosphorylation at PKA sites activates the channel. Phosphorylation at PKC sites enhances the response to phosphorylation by PKA. Phosphorylated by AMPK; this inhibits channel activity. In terms of processing, ubiquitinated, leading to its degradation in the lysosome. Deubiquitination by USP10 in early endosomes enhances its endocytic recycling to the cell membrane. Ubiquitinated by RNF185 during ER stress. Ubiquitinated by MARCHF2.

Its subcellular location is the apical cell membrane. It localises to the early endosome membrane. The protein resides in the cell membrane. It is found in the recycling endosome membrane. The protein localises to the endoplasmic reticulum membrane. Its subcellular location is the nucleus. It catalyses the reaction ATP + H2O + closed Cl(-) channel = ADP + phosphate + open Cl(-) channel.. The catalysed reaction is chloride(in) = chloride(out). The enzyme catalyses hydrogencarbonate(in) = hydrogencarbonate(out). It carries out the reaction ATP + H2O = ADP + phosphate + H(+). Functionally, epithelial ion channel that plays an important role in the regulation of epithelial ion and water transport and fluid homeostasis. Mediates the transport of chloride ions across the cell membrane. Possesses an intrinsic ATPase activity and utilizes ATP to gate its channel; the passive flow of anions through the channel is gated by cycles of ATP binding and hydrolysis by the ATP-binding domains. The ion channel is also permeable to HCO(3)(-); selectivity depends on the extracellular chloride concentration. Exerts its function also by modulating the activity of other ion channels and transporters. Contributes to the regulation of the pH and the ion content of the epithelial fluid layer. Modulates the activity of the epithelial sodium channel (ENaC) complex, in part by regulating the cell surface expression of the ENaC complex. May regulate bicarbonate secretion and salvage in epithelial cells by regulating the transporter SLC4A7. Can inhibit the chloride channel activity of ANO1. Plays a role in the chloride and bicarbonate homeostasis during sperm epididymal maturation and capacitation. The sequence is that of Cystic fibrosis transmembrane conductance regulator from Dasypus novemcinctus (Nine-banded armadillo).